We begin with the raw amino-acid sequence, 440 residues long: GTPase Der (440 aa).

EngA-type G domains follow at residues 4-168 (PIVA…PENK) and 177-352 (IKVA…NQRA). Residues 10-17 (GRPNVGKS), 57-61 (DTGGI), 120-123 (NKVD), 183-190 (GKPNVGKS), 230-234 (DTAGL), and 295-298 (NKWD) contribute to the GTP site. The 85-residue stretch at 353–437 (MRVPTGGLNE…PIRFIYREKS (85 aa)) folds into the KH-like domain.

This sequence belongs to the TRAFAC class TrmE-Era-EngA-EngB-Septin-like GTPase superfamily. EngA (Der) GTPase family. Associates with the 50S ribosomal subunit.

Its function is as follows. GTPase that plays an essential role in the late steps of ribosome biogenesis. The chain is GTPase Der from Alkaliphilus metalliredigens (strain QYMF).